A 197-amino-acid polypeptide reads, in one-letter code: SERTA domain-containing protein 3 (197 aa).

The segment at 1-23 is disordered; the sequence is MGGLKRKHSDLEEEEEEEKWDWS. The SERTA domain maps to 27–74; it reads LRSYQQALLRISLDKVQRSLGPRAPSLRRHVLIHNTLQQLQAAIRLAP.

As to quaternary structure, interacts with RPA2.

Its subcellular location is the nucleus. The protein localises to the nucleolus. Its function is as follows. Antiviral interferon-stimulated protein that plays a role in innate immunity and in the suppression of viruses through different mechanisms. Plays a role in the late phase response of TLR-induced immune effector expression. Strong transcriptional coactivator. The polypeptide is SERTA domain-containing protein 3 (Sertad3) (Mus musculus (Mouse)).